Reading from the N-terminus, the 590-residue chain is Keratin, type II cytoskeletal 5 (590 aa).

Positions 1–18 (MSRQSSVSFRSGGSRSFS) are enriched in low complexity. A disordered region spans residues 1 to 20 (MSRQSSVSFRSGGSRSFSTA). The tract at residues 1-167 (MSRQSSVSFR…DPSIQRVRTE (167 aa)) is head. A phosphoserine mark is found at Ser5, Ser8, Ser16, and Ser21. Thr24 bears the Phosphothreonine; by CDK1 mark. Ser26, Ser36, Ser50, Ser64, Ser71, Ser75, and Ser82 each carry phosphoserine. At Thr151 the chain carries Phosphothreonine; by CDK1. The coil 1A stretch occupies residues 168–203 (EREQIKTLNNKFASFIDKVRFLEQQNKVLDTKWTLL). An IF rod domain is found at 168–481 (EREQIKTLNN…KLLEGEECRL (314 aa)). The interval 204–222 (QEQGTKTVRQNLEPLFEQY) is linker 1. The tract at residues 223–315 (INNLRRQLDS…FFDAELSQMQ (93 aa)) is coil 1B. The segment at 316–338 (THVSDTSVVLSMDNNRNLDLDSI) is linker 12. The segment at 339-477 (IAEVKAQYEE…ATYRKLLEGE (139 aa)) is coil 2. The interval 478–590 (ECRLSGEGVG…TSSSRKSFKS (113 aa)) is tail. A disordered region spans residues 566–590 (GSGGGSSSSVKFVSTTSSSRKSFKS). The span at 572–590 (SSSVKFVSTTSSSRKSFKS) shows a compositional bias: low complexity.

It belongs to the intermediate filament family. In terms of assembly, heterodimer of a type I and a type II keratin. Heterodimer with type I keratin KRT25 leading to the formation of keratin intermediate filament (KIF) network. Forms a heterodimer (via 2B domains) with KRT14 (via 2B domains). Interacts with PLEC isoform 1C, when in a heterodimer with KRT14. Interacts with TCHP. Interacts with EPPK1. Interacts with AMELX. Interacts with PKP1 (via N-terminus) and PKP2. In terms of processing, phosphorylated by CDK1, AURKB and Rho-kinase, phosphorylation is regulated by the cell cycle. Thr-24 phosphorylation, mediated by CDK1, peaks during prometaphase or metaphase cells with phosphorylated filamentous structures evident throughout the cytoplasm during early mitosis. CDK1 phosphorylates Thr-24 in mitotic cells at the site of injury. Post-translationally, O-glycosylated. As to expression, expressed in corneal epithelium (at protein level). Expressed in keratinocytes (at protein level).

Its subcellular location is the cytoplasm. Functionally, required for the formation of keratin intermediate filaments in the basal epidermis and maintenance of the skin barrier in response to mechanical stress. Regulates the recruitment of Langerhans cells to the epidermis, potentially by modulation of the abundance of macrophage chemotactic cytokines, macrophage inflammatory cytokines and CTNND1 localization in keratinocytes. This is Keratin, type II cytoskeletal 5 (KRT5) from Homo sapiens (Human).